An 868-amino-acid chain; its full sequence is Leucine--tRNA ligase (868 aa).

A 'HIGH' region motif is present at residues 42 to 52 (PYPSGKLHMGH). The short motif at 627–631 (KMSKS) is the 'KMSKS' region element. Lys630 is a binding site for ATP.

This sequence belongs to the class-I aminoacyl-tRNA synthetase family.

Its subcellular location is the cytoplasm. It catalyses the reaction tRNA(Leu) + L-leucine + ATP = L-leucyl-tRNA(Leu) + AMP + diphosphate. The sequence is that of Leucine--tRNA ligase from Pseudomonas syringae pv. tomato (strain ATCC BAA-871 / DC3000).